The chain runs to 644 residues: Far upstream element-binding protein 1 (644 aa).

Disordered regions lie at residues 1–31 (MADY…NDAF) and 44–94 (KIGG…PMHQ). A2 is modified (N-acetylalanine). Residues 14-27 (SAGGGGGGGGGGGV) are compositionally biased toward gly residues. Phosphoserine is present on residues S52 and S55. Over residues 65-77 (RPLEDGDQPDAKK) the composition is skewed to basic and acidic residues. The segment covering 81-94 (QNDSFGTQLPPMHQ) has biased composition (polar residues). KH domains are found at residues 100 to 164 (VMTE…KRLL), 185 to 251 (NAVQ…KEMV), and 275 to 339 (NEGI…AEII). Residue S140 is modified to Phosphoserine. T153 bears the Phosphothreonine mark. Residues R321, R359, R361, and R363 each carry the omega-N-methylarginine modification. Residues 346–365 (VQAGNPGGPGPGGRGRGRGQ) form a disordered region. Residues 350–365 (NPGGPGPGGRGRGRGQ) are compositionally biased toward gly residues. Residues 376-443 (LQEFNFIVPT…QQIDYARQLI (68 aa)) enclose the KH 4 domain. T432 bears the Phosphothreonine mark. 2 disordered regions span residues 447 to 532 (IGGP…GTDP) and 548 to 580 (QAQP…AGQV). Residues 468–505 (PHGPPGPPGPGTPMGPYNPAPYNPGPPGPAPHGPPAPY) are compositionally biased toward pro residues. The span at 556–573 (PAGAPTTTQTNGQGDQQN) shows a compositional bias: low complexity. Residue S630 is modified to Phosphoserine.

In terms of assembly, found in a complex with PUF60 and far upstream element (FUSE) DNA segment. Interacts with PUF60 and JTV1. In terms of processing, ubiquitinated. This targets the protein for proteasome-mediated degradation.

It is found in the nucleus. Regulates MYC expression by binding to a single-stranded far-upstream element (FUSE) upstream of the MYC promoter. May act both as activator and repressor of transcription. The polypeptide is Far upstream element-binding protein 1 (FUBP1) (Homo sapiens (Human)).